Here is a 103-residue protein sequence, read N- to C-terminus: Histone H4 (103 aa).

Positions Met1–Gly14 are enriched in gly residues. The segment at Met1 to Arg20 is disordered. At Lys6 the chain carries N6-acetyl-N6-methyllysine; alternate. An N6-acetyllysine; alternate mark is found at Lys6, Lys9, and Lys13. N6-methyllysine; alternate is present on residues Lys6, Lys9, and Lys13. Lys9 and Lys13 each carry N6-butyryllysine; alternate. The residue at position 13 (Lys13) is an N6-acetyl-N6-methyllysine; alternate. N6-acetyllysine is present on Lys17. The DNA-binding element occupies Lys17–Lys21. At Lys32 the chain carries N6-succinyllysine. The residue at position 56 (Arg56) is an Omega-N-methylarginine. 2 positions are modified to phosphoserine: Ser61 and Ser65. Lys78 is subject to N6-succinyllysine. Lys80 is subject to N6-acetyllysine. Lys92 carries the N6-glutaryllysine modification.

The protein belongs to the histone H4 family. The nucleosome is a histone octamer containing two molecules each of H2A, H2B, H3 and H4 assembled in one H3-H4 heterotetramer and two H2A-H2B heterodimers. The octamer wraps approximately 147 bp of DNA. Histone H4 is a component of the UAF (upstream activation factor) complex which consists of UAF30, RRN5, RRN9, RRN10, and histones H3 and H4. Post-translationally, glutarylation at Lys-92 (H4K91glu) destabilizes nucleosomes by promoting dissociation of the H2A-H2B dimers from nucleosomes.

The protein resides in the nucleus. It localises to the chromosome. Core component of nucleosome. Nucleosomes wrap and compact DNA into chromatin, limiting DNA accessibility to the cellular machineries which require DNA as a template. Histones thereby play a central role in transcription regulation, DNA repair, DNA replication and chromosomal stability. DNA accessibility is regulated via a complex set of post-translational modifications of histones, also called histone code, and nucleosome remodeling. Component of the UAF (upstream activation factor) complex which interacts with the upstream element of the RNA polymerase I promoter and forms a stable preinitiation complex. Together with SPT15/TBP UAF seems to stimulate basal transcription to a fully activated level. This Saccharomyces cerevisiae (strain ATCC 204508 / S288c) (Baker's yeast) protein is Histone H4 (HHF1).